Reading from the N-terminus, the 105-residue chain is Large ribosomal subunit protein uL24 (105 aa).

Belongs to the universal ribosomal protein uL24 family. Part of the 50S ribosomal subunit.

Functionally, one of two assembly initiator proteins, it binds directly to the 5'-end of the 23S rRNA, where it nucleates assembly of the 50S subunit. One of the proteins that surrounds the polypeptide exit tunnel on the outside of the subunit. This Staphylococcus aureus (strain Mu3 / ATCC 700698) protein is Large ribosomal subunit protein uL24.